The following is a 250-amino-acid chain: Probable E3 ubiquitin-protein ligase RHY1A (250 aa).

Polar residues predominate over residues 1 to 10 (MTSASELFST). Positions 1-106 (MTSASELFST…ETQSSSFVNL (106 aa)) are disordered. The span at 29 to 47 (YRHHSHHHHRRHGVHHHNQ) shows a compositional bias: basic residues. Residues 48 to 58 (RHDSDGCDPLR) are compositionally biased toward basic and acidic residues. Residues 60 to 69 (PTPRLRRFFH) are compositionally biased toward basic residues. Positions 71–80 (PIQERSRPIR) are enriched in basic and acidic residues. Positions 91–102 (TDSTDTETQSSS) are enriched in low complexity. The segment at 203–244 (CSICLESFTKGDMLISLPCTHSFHSSCLNPWLRACGDCPCCR) adopts an RING-type; atypical zinc-finger fold.

It catalyses the reaction S-ubiquitinyl-[E2 ubiquitin-conjugating enzyme]-L-cysteine + [acceptor protein]-L-lysine = [E2 ubiquitin-conjugating enzyme]-L-cysteine + N(6)-ubiquitinyl-[acceptor protein]-L-lysine.. Its pathway is protein modification; protein ubiquitination. In terms of biological role, probable E3 ubiquitin-protein ligase that may possess E3 ubiquitin ligase activity in vitro. This chain is Probable E3 ubiquitin-protein ligase RHY1A, found in Arabidopsis thaliana (Mouse-ear cress).